The primary structure comprises 529 residues: Cytochrome P450 monooxygenase 45 (529 aa).

The chain crosses the membrane as a helical span at residues 24-44 (VLTICILALLTFVLREIVLYF). N-linked (GlcNAc...) asparagine glycans are attached at residues N185 and N322. C454 lines the heme pocket.

Belongs to the cytochrome P450 family. Heme serves as cofactor.

It localises to the membrane. The protein operates within secondary metabolite biosynthesis. Functionally, cytochrome P450 monooxygenase that is able to use trans-stilbene as a substrate for oxidation. The chain is Cytochrome P450 monooxygenase 45 from Postia placenta (strain ATCC 44394 / Madison 698-R) (Brown rot fungus).